The sequence spans 173 residues: Probable DNA-directed RNA polymerase subunit delta (173 aa).

Positions L14 to W81 constitute an HTH HARE-type domain. The segment at Q86 to R173 is disordered. Over residues I109–R173 the composition is skewed to acidic residues.

This sequence belongs to the RpoE family. In terms of assembly, RNAP is composed of a core of 2 alpha, a beta and a beta' subunits. The core is associated with a delta subunit and one of several sigma factors.

Participates in both the initiation and recycling phases of transcription. In the presence of the delta subunit, RNAP displays an increased specificity of transcription, a decreased affinity for nucleic acids, and an increased efficiency of RNA synthesis because of enhanced recycling. The polypeptide is Probable DNA-directed RNA polymerase subunit delta (Oceanobacillus iheyensis (strain DSM 14371 / CIP 107618 / JCM 11309 / KCTC 3954 / HTE831)).